We begin with the raw amino-acid sequence, 71 residues long: Large ribosomal subunit protein bL31 (71 aa).

The Zn(2+) site is built by Cys-16, Cys-18, Cys-36, and Cys-39.

The protein belongs to the bacterial ribosomal protein bL31 family. Type A subfamily. In terms of assembly, part of the 50S ribosomal subunit. Requires Zn(2+) as cofactor.

Functionally, binds the 23S rRNA. The chain is Large ribosomal subunit protein bL31 from Thermotoga sp. (strain RQ2).